Here is an 82-residue protein sequence, read N- to C-terminus: Small ribosomal subunit protein uS17 (82 aa).

Belongs to the universal ribosomal protein uS17 family. In terms of assembly, part of the 30S ribosomal subunit.

In terms of biological role, one of the primary rRNA binding proteins, it binds specifically to the 5'-end of 16S ribosomal RNA. This is Small ribosomal subunit protein uS17 from Shewanella amazonensis (strain ATCC BAA-1098 / SB2B).